A 430-amino-acid chain; its full sequence is MKNKTSAGLFSRAKEVIPGGVNSPVRAFRAVGGNPLFIKRAHGAYLVDEDDNQYIELINSWGPMILGHGNELIEKAVRDALSNSLSFGAPSRKEVEMAELIVSMVPSVEMVRMVNSGTEATMSAIRVARGYTGKEKIIKFEGCYHGHGDSFLIAAGSGAVTMGVPDSPGVPQGVANDTLTAPYNDIEAVRILVEKNKNKIAAIIIEPVAGNMGCVLPKAGFLEALREICDQENIVLIFDEVMSGFRLSVSGAQGVYGVQPDMTTMGKIIGGGMPVGAYGGKKEIMQNVSPSGPIYQAGTLSGNPIAMSAGLAILQYLQASPALYTQLNDQTDYLIHGMRKANNLLGLDYTFNHVGSMFTMFFTNIGVYDFETAKKSDLSKFAAYFQAMLSRGIYLAPSQFESLFISSAITKQLADQIIQAHAESMKEIHN.

N6-(pyridoxal phosphate)lysine is present on Lys267.

It belongs to the class-III pyridoxal-phosphate-dependent aminotransferase family. HemL subfamily. In terms of assembly, homodimer. The cofactor is pyridoxal 5'-phosphate.

It localises to the cytoplasm. It carries out the reaction (S)-4-amino-5-oxopentanoate = 5-aminolevulinate. The protein operates within porphyrin-containing compound metabolism; protoporphyrin-IX biosynthesis; 5-aminolevulinate from L-glutamyl-tRNA(Glu): step 2/2. The sequence is that of Glutamate-1-semialdehyde 2,1-aminomutase from Cytophaga hutchinsonii (strain ATCC 33406 / DSM 1761 / CIP 103989 / NBRC 15051 / NCIMB 9469 / D465).